The chain runs to 105 residues: Phosphoribosyl-ATP pyrophosphatase (105 aa).

Belongs to the PRA-PH family.

The protein resides in the cytoplasm. It catalyses the reaction 1-(5-phospho-beta-D-ribosyl)-ATP + H2O = 1-(5-phospho-beta-D-ribosyl)-5'-AMP + diphosphate + H(+). It participates in amino-acid biosynthesis; L-histidine biosynthesis; L-histidine from 5-phospho-alpha-D-ribose 1-diphosphate: step 2/9. The chain is Phosphoribosyl-ATP pyrophosphatase from Ruegeria sp. (strain TM1040) (Silicibacter sp.).